We begin with the raw amino-acid sequence, 518 residues long: Glucose-6-phosphate 1-dehydrogenase (518 aa).

NADP(+) contacts are provided by residues 36–43 (GASGDLAK), arginine 70, and lysine 169. D-glucose 6-phosphate-binding positions include lysine 169, 199–203 (HYLGK), glutamate 237, and aspartate 256. Histidine 261 acts as the Proton acceptor in catalysis. Arginine 356 provides a ligand contact to NADP(+). Lysine 359 and arginine 364 together coordinate D-glucose 6-phosphate. Residues lysine 365, arginine 369, and arginine 392 each coordinate NADP(+). Glutamine 394 provides a ligand contact to D-glucose 6-phosphate. NADP(+) contacts are provided by residues 400–402 (YFK), 420–422 (DLT), arginine 486, tyrosine 502, and tryptophan 508.

The protein belongs to the glucose-6-phosphate dehydrogenase family.

Its subcellular location is the cytoplasm. It is found in the cytosol. The catalysed reaction is D-glucose 6-phosphate + NADP(+) = 6-phospho-D-glucono-1,5-lactone + NADPH + H(+). Its pathway is carbohydrate degradation; pentose phosphate pathway; D-ribulose 5-phosphate from D-glucose 6-phosphate (oxidative stage): step 1/3. Functionally, cytosolic glucose-6-phosphate dehydrogenase that catalyzes the first and rate-limiting step of the oxidative branch within the pentose phosphate pathway/shunt, an alternative route to glycolysis for the dissimilation of carbohydrates and a major source of reducing power and metabolic intermediates for fatty acid and nucleic acid biosynthetic processes. The chain is Glucose-6-phosphate 1-dehydrogenase (Zw) from Drosophila yakuba (Fruit fly).